The primary structure comprises 204 residues: Small ribosomal subunit protein uS4 (204 aa).

Residues 92 to 157 (RRLDALVLRS…KPLFEVAREG (66 aa)) enclose the S4 RNA-binding domain.

Belongs to the universal ribosomal protein uS4 family. In terms of assembly, part of the 30S ribosomal subunit. Contacts protein S5. The interaction surface between S4 and S5 is involved in control of translational fidelity.

Its function is as follows. One of the primary rRNA binding proteins, it binds directly to 16S rRNA where it nucleates assembly of the body of the 30S subunit. In terms of biological role, with S5 and S12 plays an important role in translational accuracy. The protein is Small ribosomal subunit protein uS4 of Streptomyces avermitilis (strain ATCC 31267 / DSM 46492 / JCM 5070 / NBRC 14893 / NCIMB 12804 / NRRL 8165 / MA-4680).